Reading from the N-terminus, the 78-residue chain is Large ribosomal subunit protein bL28 (78 aa).

The disordered stretch occupies residues 1–25; that stretch reads MSRVCQVTGKRPAVGNNRSHAKNAT.

It belongs to the bacterial ribosomal protein bL28 family.

The protein is Large ribosomal subunit protein bL28 of Aliivibrio fischeri (strain ATCC 700601 / ES114) (Vibrio fischeri).